Consider the following 332-residue polypeptide: DNA-directed RNA polymerase subunit alpha (332 aa).

Residues 1-232 form an alpha N-terminal domain (alpha-NTD) region; that stretch reads MKGYLKDFLK…DQLSVFVDLE (232 aa). An alpha C-terminal domain (alpha-CTD) region spans residues 247 to 332; the sequence is IDPVLLRPID…SLGDRARIAG (86 aa).

This sequence belongs to the RNA polymerase alpha chain family. Homodimer. The RNAP catalytic core consists of 2 alpha, 1 beta, 1 beta' and 1 omega subunit. When a sigma factor is associated with the core the holoenzyme is formed, which can initiate transcription.

It catalyses the reaction RNA(n) + a ribonucleoside 5'-triphosphate = RNA(n+1) + diphosphate. Functionally, DNA-dependent RNA polymerase catalyzes the transcription of DNA into RNA using the four ribonucleoside triphosphates as substrates. The polypeptide is DNA-directed RNA polymerase subunit alpha (Halorhodospira halophila (strain DSM 244 / SL1) (Ectothiorhodospira halophila (strain DSM 244 / SL1))).